The primary structure comprises 136 residues: Phospholipase A2 (136 aa).

Residues tryptophan 8, glycine 10, and glycine 12 each coordinate Ca(2+). Cystine bridges form between cysteine 9-cysteine 31, cysteine 30-cysteine 70, cysteine 37-cysteine 63, cysteine 61-cysteine 95, and cysteine 105-cysteine 117. A glycan (N-linked (GlcNAc...) asparagine) is linked at asparagine 16. Histidine 34 is a catalytic residue. Aspartate 35 serves as a coordination point for Ca(2+). Aspartate 64 is a catalytic residue.

Belongs to the phospholipase A2 family. Requires Ca(2+) as cofactor. In terms of tissue distribution, expressed by the venom gland.

It is found in the secreted. The enzyme catalyses a 1,2-diacyl-sn-glycero-3-phosphocholine + H2O = a 1-acyl-sn-glycero-3-phosphocholine + a fatty acid + H(+). PLA2 catalyzes the calcium-dependent hydrolysis of the 2-acyl groups in 3-sn-phosphoglycerides. The protein is Phospholipase A2 of Bombus terrestris (Buff-tailed bumblebee).